The sequence spans 201 residues: Adenylyl-sulfate kinase (201 aa).

An ATP-binding site is contributed by 35–42 (GLSGSGKS). The active-site Phosphoserine intermediate is S109.

This sequence belongs to the APS kinase family.

It catalyses the reaction adenosine 5'-phosphosulfate + ATP = 3'-phosphoadenylyl sulfate + ADP + H(+). The protein operates within sulfur metabolism; hydrogen sulfide biosynthesis; sulfite from sulfate: step 2/3. Catalyzes the synthesis of activated sulfate. This Erwinia tasmaniensis (strain DSM 17950 / CFBP 7177 / CIP 109463 / NCPPB 4357 / Et1/99) protein is Adenylyl-sulfate kinase.